Here is a 129-residue protein sequence, read N- to C-terminus: Large ribosomal subunit protein bL12 (129 aa).

It belongs to the bacterial ribosomal protein bL12 family. As to quaternary structure, homodimer. Part of the ribosomal stalk of the 50S ribosomal subunit. Forms a multimeric L10(L12)X complex, where L10 forms an elongated spine to which 2 to 4 L12 dimers bind in a sequential fashion. Binds GTP-bound translation factors.

Functionally, forms part of the ribosomal stalk which helps the ribosome interact with GTP-bound translation factors. Is thus essential for accurate translation. The chain is Large ribosomal subunit protein bL12 from Synechococcus sp. (strain CC9605).